Here is an 889-residue protein sequence, read N- to C-terminus: MTFTINNTNSTVFDSTNNENMTISEPVQPVSKGPKGITFSGETFIVPETHDMVKTLFDPTVKKSNFELIILSCLFSNLLVFLIPNNQIRIYIFIALYIFWRLSYNFGIGWLLQNQSNHNLLVSWSQKYHLFDPENKGALAQSIQNEIKSQRGENYDIKSMPVEFNTWLIFRKFVDLILMSDFITFCCVVYCSAIKDDYQFINNQSFWLVYSRIVLGSGLILFNLWVKVNAHNTIKDYAWYWGDFFFRQINNEELIFDGVFEMVPHPMYSVGYVGYYGFALIAKSYVVLAIAIFGHFLQMIFLHYIENPHIDKIYGPSKNEINLIKILKLKDLKNFDNLKPLVGLTNFNWMRASDIVNLVLSLTYGIIIPLFANSIKSLFILTVGMKLFESISINLSLTLQSYFKIVTKWSLSNDIPVEKSFSNWAVLYNSLINLTYSSLFGMNLGYFLQKSGSGSSSGGLLFSDWFYLRVFLGLLLIYTQFWINFSIIDSIGYFGWFYGDFFIPKSQSSIKNITTAGVYRYLNNPEQIFGVCGVMGIFLIYPTVENFVCVGLWVVNNFIRINFIEKSHMVKLYGEQEVNRDSGVTKTVKKHLLPEVIQRRMSNDEAYTRVNGTTHERRRRRSSNLHGNSVADSLDNFIRDLRNSSTKLSQQKLIELSQNLSFANSDYKLTIDGLKMQSTESDELKYTTIGTPVTVSWTSPTENHSVRDWIGLYKIVQTSYSRNKTILSSAGRWTWCKEPKGSFIFDKEKLFWEEGVYEFRYHLDGKHDVAYISEPFEIKSIELKVPEFKEDAIKFAENLKLEIFDKVIKLTDINEAISPIANQSDNVIEVYKLISSMISKSTKINITYKIFLNQGDDDLLSIKDVAIKLINIKHVLEELSYNITDKKDV.

The Lumenal segment spans residues 1–63 (MTFTINNTNS…KTLFDPTVKK (63 aa)). A helical membrane pass occupies residues 64–84 (SNFELIILSCLFSNLLVFLIP). Residues 85–91 (NNQIRIY) lie on the Cytoplasmic side of the membrane. Residues 92-112 (IFIALYIFWRLSYNFGIGWLL) form a helical membrane-spanning segment. Residues 113 to 173 (QNQSNHNLLV…FNTWLIFRKF (61 aa)) lie on the Lumenal side of the membrane. Residues 174–194 (VDLILMSDFITFCCVVYCSAI) form a helical membrane-spanning segment. Residues 195–205 (KDDYQFINNQS) are Cytoplasmic-facing. The helical transmembrane segment at 206–226 (FWLVYSRIVLGSGLILFNLWV) threads the bilayer. Topologically, residues 227–261 (KVNAHNTIKDYAWYWGDFFFRQINNEELIFDGVFE) are lumenal. The helical transmembrane segment at 262–282 (MVPHPMYSVGYVGYYGFALIA) threads the bilayer. Residues 283 to 284 (KS) are Cytoplasmic-facing. A helical transmembrane segment spans residues 285 to 305 (YVVLAIAIFGHFLQMIFLHYI). The Lumenal portion of the chain corresponds to 306–354 (ENPHIDKIYGPSKNEINLIKILKLKDLKNFDNLKPLVGLTNFNWMRASD). Residues 355–375 (IVNLVLSLTYGIIIPLFANSI) form a helical membrane-spanning segment. Over 376–377 (KS) the chain is Cytoplasmic. Residues 378–398 (LFILTVGMKLFESISINLSLT) form a helical membrane-spanning segment. At 399-423 (LQSYFKIVTKWSLSNDIPVEKSFSN) the chain is on the lumenal side. Residues 424-444 (WAVLYNSLINLTYSSLFGMNL) traverse the membrane as a helical segment. Topologically, residues 445–470 (GYFLQKSGSGSSSGGLLFSDWFYLRV) are cytoplasmic. The chain crosses the membrane as a helical span at residues 471 to 491 (FLGLLLIYTQFWINFSIIDSI). Residues 492–527 (GYFGWFYGDFFIPKSQSSIKNITTAGVYRYLNNPEQ) are Lumenal-facing. Residues 528–548 (IFGVCGVMGIFLIYPTVENFV) form a helical membrane-spanning segment. At 549-889 (CVGLWVVNNF…SYNITDKKDV (341 aa)) the chain is on the cytoplasmic side. The segment at 606–627 (AYTRVNGTTHERRRRRSSNLHG) is disordered.

The protein belongs to the class VI-like SAM-binding methyltransferase superfamily. CHO2 family.

It localises to the endoplasmic reticulum membrane. It carries out the reaction a 1,2-diacyl-sn-glycero-3-phosphoethanolamine + S-adenosyl-L-methionine = a 1,2-diacyl-sn-glycero-3-phospho-N-methylethanolamine + S-adenosyl-L-homocysteine + H(+). It functions in the pathway phospholipid metabolism; phosphatidylcholine biosynthesis. Functionally, catalyzes the first step of the methylation pathway of phosphatidylcholine biosynthesis, the SAM-dependent methylation of phosphatidylethanolamine (PE) to phosphatidylmonomethylethanolamine (PMME). In Candida albicans (strain WO-1) (Yeast), this protein is Phosphatidylethanolamine N-methyltransferase (CHO2).